Here is a 217-residue protein sequence, read N- to C-terminus: Pyridoxine/pyridoxamine 5'-phosphate oxidase (217 aa).

Residues 66–71 (RMVLLK), 81–82 (FT), R87, K88, and Q110 contribute to the FMN site. Position 71 (K71) interacts with substrate. Residues Y128, R132, and S136 each contribute to the substrate site. Residues 145–146 (QS) and W190 contribute to the FMN site. 196–198 (RLH) contacts substrate. An FMN-binding site is contributed by R200.

This sequence belongs to the pyridoxamine 5'-phosphate oxidase family. As to quaternary structure, homodimer. FMN serves as cofactor.

The catalysed reaction is pyridoxamine 5'-phosphate + O2 + H2O = pyridoxal 5'-phosphate + H2O2 + NH4(+). It carries out the reaction pyridoxine 5'-phosphate + O2 = pyridoxal 5'-phosphate + H2O2. Its pathway is cofactor metabolism; pyridoxal 5'-phosphate salvage; pyridoxal 5'-phosphate from pyridoxamine 5'-phosphate: step 1/1. The protein operates within cofactor metabolism; pyridoxal 5'-phosphate salvage; pyridoxal 5'-phosphate from pyridoxine 5'-phosphate: step 1/1. In terms of biological role, catalyzes the oxidation of either pyridoxine 5'-phosphate (PNP) or pyridoxamine 5'-phosphate (PMP) into pyridoxal 5'-phosphate (PLP). In Psychromonas ingrahamii (strain DSM 17664 / CCUG 51855 / 37), this protein is Pyridoxine/pyridoxamine 5'-phosphate oxidase.